The following is a 448-amino-acid chain: Glutamyl-tRNA reductase 2 (448 aa).

Residues threonine 50–arginine 53, serine 109, glutamate 114–aspartate 116, and glutamine 120 each bind substrate. The active-site Nucleophile is cysteine 51. Glycine 190–alanine 195 contacts NADP(+). Residues aspartate 423–arginine 448 are disordered. Residues proline 433 to alanine 442 are compositionally biased toward polar residues.

This sequence belongs to the glutamyl-tRNA reductase family. In terms of assembly, homodimer.

The enzyme catalyses (S)-4-amino-5-oxopentanoate + tRNA(Glu) + NADP(+) = L-glutamyl-tRNA(Glu) + NADPH + H(+). The protein operates within porphyrin-containing compound metabolism; protoporphyrin-IX biosynthesis; 5-aminolevulinate from L-glutamyl-tRNA(Glu): step 1/2. Functionally, catalyzes the NADPH-dependent reduction of glutamyl-tRNA(Glu) to glutamate 1-semialdehyde (GSA). The chain is Glutamyl-tRNA reductase 2 from Nocardioides sp. (strain ATCC BAA-499 / JS614).